Here is a 439-residue protein sequence, read N- to C-terminus: Forkhead box protein J1-A (439 aa).

Residues 124–218 (KPPYSYATLI…INGAMKKRRL (95 aa)) constitute a DNA-binding region (fork-head). Residues 273–293 (EHGWNSISDGKSHKRKQPLPK) are disordered. Basic residues predominate over residues 284-293 (SHKRKQPLPK).

It belongs to the FOXJ1 family. As to expression, expressed in two independent areas of stage 10-11 embryos; in the dorsal blastopore lip (Spemann organizer) and shortly after in the ectodermal cells of the animal cap. As development proceeds, cells of the animal cap contribute to the epidermis and show a spotty pattern, which suggests expression in ciliated epidermal cells. Distribution of these cells is uniform in the trunk area of the embryo but more random in the head, being practically absent in the cement gland and olfactory placode. The spotted pattern becomes more dispersed as embryos grow in size. Due to cell movements during gastrulation, expression in the dorsal lip becomes located in the dorsal midline with expression restricted to the neuroectoderm. Expressed transiently in cells of the newly formed neural floor plate in the tail of older tadpoles.

It localises to the nucleus. Its function is as follows. Key transcription factor required for motile ciliogenesis. Activates genes essential for motile cilia formation and function. Required for ciliogenesis in multiciliated cells. In Xenopus laevis (African clawed frog), this protein is Forkhead box protein J1-A (foxj1-a).